The following is a 335-amino-acid chain: ATP-dependent 6-phosphofructokinase (335 aa).

Residue glycine 11 participates in ATP binding. Position 21-25 (21-25) interacts with ADP; sequence RAVVR. Residues 72–73 and 102–105 each bind ATP; these read RY and GDGS. Aspartate 103 provides a ligand contact to Mg(2+). Residue 125–127 coordinates substrate; the sequence is TID. The Proton acceptor role is filled by aspartate 127. Arginine 154 provides a ligand contact to ADP. Residues arginine 162 and 169–171 contribute to the substrate site; that span reads MGR. ADP is bound by residues 185-187 and 213-215; these read GAD and KKH. Substrate is bound by residues glutamate 222, arginine 244, and 250 to 253; that span reads HIQR.

Belongs to the phosphofructokinase type A (PFKA) family. ATP-dependent PFK group I subfamily. Prokaryotic clade 'B1' sub-subfamily. As to quaternary structure, homotetramer. It depends on Mg(2+) as a cofactor.

It is found in the cytoplasm. It carries out the reaction beta-D-fructose 6-phosphate + ATP = beta-D-fructose 1,6-bisphosphate + ADP + H(+). The protein operates within carbohydrate degradation; glycolysis; D-glyceraldehyde 3-phosphate and glycerone phosphate from D-glucose: step 3/4. With respect to regulation, allosterically activated by ADP and other diphosphonucleosides, and allosterically inhibited by phosphoenolpyruvate. Its function is as follows. Catalyzes the phosphorylation of D-fructose 6-phosphate to fructose 1,6-bisphosphate by ATP, the first committing step of glycolysis. The protein is ATP-dependent 6-phosphofructokinase of Streptococcus pneumoniae serotype 19F (strain G54).